The chain runs to 206 residues: uncharacterized protein (206 aa).

Disordered regions lie at residues 64 to 123 (NTES…DPSL) and 155 to 206 (VTTP…SSGG). Positions 66 to 79 (ESTQKTATTQQQGL) are enriched in polar residues. The segment covering 97 to 107 (AENNAQANQSE) has biased composition (low complexity). Residues 108–118 (NRAESTTKAES) show a composition bias toward basic and acidic residues. The span at 155–167 (VTTPTGQVVQPQT) shows a compositional bias: low complexity. A compositionally biased stretch (polar residues) spans 182-198 (GSMNSKPVSRGGFSSPN).

This is an uncharacterized protein from Haemophilus influenzae (strain ATCC 51907 / DSM 11121 / KW20 / Rd).